The sequence spans 409 residues: Glycinol 4-dimethylallyltransferase (409 aa).

The N-terminal 44 residues, 1–44 (MDWGLAISSHPKPYSVTTGGNLWRSKHTTKNIYFASSWISKASR), are a transit peptide targeting the chloroplast. The next 9 helical transmembrane spans lie at 113–133 (LSAFYWFSYPYTMIGITLCAF), 148–168 (LSFLIGVLQGVLPQLFIEIYL), 200–220 (VIISAAFLALSFGFTWITGSW), 222–242 (LICNLVVIASSWTAYSIDVPL), 249–269 (PFVAAMCMISTWALALPISYF), 287–307 (LGFLVAFMTFYSLGLALSKDI), 330–350 (AFWICVSFFEMAFGVGILAGA), 354–374 (HFWTKIFTGMGNAVLASILWY), and 388–408 (GSFYMFIWKLLYAGFFLMALI).

It belongs to the UbiA prenyltransferase family. It depends on Mg(2+) as a cofactor. Mn(2+) is required as a cofactor. Co(2+) serves as cofactor.

It is found in the plastid. The protein resides in the chloroplast membrane. It catalyses the reaction (6aS,11aS)-3,6a,9-trihydroxypterocarpan + dimethylallyl diphosphate = (6aS,11aS)-2-dimethylallyl-3,6a,9-trihydroxypterocarpan + diphosphate. It carries out the reaction (6aS,11aS)-3,6a,9-trihydroxypterocarpan + dimethylallyl diphosphate = (6aS,11aS)-4-dimethylallyl-3,6a,9-trihydroxypterocarpan + diphosphate. It participates in phytoalexin biosynthesis; pterocarpan phytoalexin biosynthesis. Proposed to be involved in the biosynthesis of pterocarpan phytoalexins, specifically glyceollins. Can act as a prenyltransferase towards glycinol which is the direct precursor of glyceollins. Seems to be specific for prenylation at C-4 thus producing glyceollin I. The sequence is that of Glycinol 4-dimethylallyltransferase (G4DT) from Glycine max (Soybean).